A 336-amino-acid polypeptide reads, in one-letter code: Isopentenyl-diphosphate delta-isomerase (336 aa).

5-6 is a substrate binding site; sequence RK. FMN-binding positions include 60–62, Ser-90, and Asn-117; that span reads AMT. Gln-147 is a substrate binding site. Glu-148 serves as a coordination point for Mg(2+). FMN-binding positions include Lys-179, Ser-204, Thr-209, 253-255, and 274-275; these read GVR and SR.

It belongs to the IPP isomerase type 2 family. As to quaternary structure, homooctamer. Dimer of tetramers. FMN serves as cofactor. Requires NADPH as cofactor. It depends on Mg(2+) as a cofactor.

Its subcellular location is the cytoplasm. The catalysed reaction is isopentenyl diphosphate = dimethylallyl diphosphate. Its function is as follows. Involved in the biosynthesis of isoprenoids. Catalyzes the 1,3-allylic rearrangement of the homoallylic substrate isopentenyl (IPP) to its allylic isomer, dimethylallyl diphosphate (DMAPP). The polypeptide is Isopentenyl-diphosphate delta-isomerase (Streptococcus pneumoniae serotype 4 (strain ATCC BAA-334 / TIGR4)).